The primary structure comprises 308 residues: L-lactate dehydrogenase 2 (308 aa).

Residues Val-13, Asp-34, Arg-39, Tyr-64, and 78–79 (GV) contribute to the NAD(+) site. Residue Arg-87 participates in substrate binding. Thr-100 lines the NAD(+) pocket. 119-122 (NPVD) contacts substrate. Thr-142 is a binding site for NAD(+). Residue 147-150 (DSMR) participates in substrate binding. His-174 functions as the Proton acceptor in the catalytic mechanism. Thr-224 lines the substrate pocket.

This sequence belongs to the LDH/MDH superfamily. LDH family. As to quaternary structure, homotetramer.

The protein resides in the cytoplasm. It catalyses the reaction (S)-lactate + NAD(+) = pyruvate + NADH + H(+). It participates in fermentation; pyruvate fermentation to lactate; (S)-lactate from pyruvate: step 1/1. Catalyzes the conversion of lactate to pyruvate. The protein is L-lactate dehydrogenase 2 of Lactobacillus acidophilus (strain ATCC 700396 / NCK56 / N2 / NCFM).